Consider the following 343-residue polypeptide: ATPase GET3 (343 aa).

32–39 (KGGVGKTT) is a binding site for ATP. Asp-61 is an active-site residue. Residues Glu-245 and Asn-272 each contribute to the ATP site. 2 residues coordinate Zn(2+): Cys-283 and Cys-286.

The protein belongs to the arsA ATPase family. Homodimer.

It localises to the cytoplasm. The protein resides in the endoplasmic reticulum. Functionally, ATPase required for the post-translational delivery of tail-anchored (TA) proteins to the endoplasmic reticulum. Recognizes and selectively binds the transmembrane domain of TA proteins in the cytosol. This complex then targets to the endoplasmic reticulum by membrane-bound receptors, where the tail-anchored protein is released for insertion. This process is regulated by ATP binding and hydrolysis. ATP binding drives the homodimer towards the closed dimer state, facilitating recognition of newly synthesized TA membrane proteins. ATP hydrolysis is required for insertion. Subsequently, the homodimer reverts towards the open dimer state, lowering its affinity for the membrane-bound receptor, and returning it to the cytosol to initiate a new round of targeting. The sequence is that of ATPase GET3 from Pyricularia oryzae (strain 70-15 / ATCC MYA-4617 / FGSC 8958) (Rice blast fungus).